Reading from the N-terminus, the 333-residue chain is 2-haloacrylate reductase (333 aa).

An NADP(+)-binding site is contributed by Ala-153–Gly-159.

It belongs to the zinc-containing alcohol dehydrogenase family.

It carries out the reaction (S)-2-chloropropanoate + NADP(+) = 2-chloroacrylate + NADPH + H(+). Involved in the degradation of unsaturated organohalogen compounds. Catalyzes the NADPH-dependent reduction of the carbon-carbon double bond of 2-chloroacrylate to produce (S)-2-chloropropionate, which is probably further metabolized to (R)-lactate by (S)-2-haloacid dehalogenase. Can also use 2-bromoacrylate as substrate. Does not act on acrylate, methacrylate, 1,4-benzoquinone and 1,4-naphthoquinone. The sequence is that of 2-haloacrylate reductase from Burkholderia sp.